The chain runs to 601 residues: Bifunctional protein GlmU (601 aa).

The segment at Met-1–Arg-375 is pyrophosphorylase. Residues Leu-10–Gly-13, Lys-24, Gln-75, and Gly-81–Thr-82 each bind UDP-N-acetyl-alpha-D-glucosamine. Mg(2+) is bound at residue Asp-165. Gly-201, Glu-216, Asn-230, and Asn-373 together coordinate UDP-N-acetyl-alpha-D-glucosamine. Asn-373 serves as a coordination point for Mg(2+). A linker region spans residues Val-376 to Tyr-396. An N-acetyltransferase region spans residues Gly-397–Gly-601. The UDP-N-acetyl-alpha-D-glucosamine site is built by Arg-478 and Lys-496. Residue His-508 is the Proton acceptor of the active site. UDP-N-acetyl-alpha-D-glucosamine is bound by residues Tyr-511 and Asn-522. Acetyl-CoA-binding positions include Ala-525, Asn-531–Tyr-532, and Ala-568.

This sequence in the N-terminal section; belongs to the N-acetylglucosamine-1-phosphate uridyltransferase family. In the C-terminal section; belongs to the transferase hexapeptide repeat family. Homotrimer. Requires Mg(2+) as cofactor.

It localises to the cytoplasm. The catalysed reaction is alpha-D-glucosamine 1-phosphate + acetyl-CoA = N-acetyl-alpha-D-glucosamine 1-phosphate + CoA + H(+). The enzyme catalyses N-acetyl-alpha-D-glucosamine 1-phosphate + UTP + H(+) = UDP-N-acetyl-alpha-D-glucosamine + diphosphate. Its pathway is nucleotide-sugar biosynthesis; UDP-N-acetyl-alpha-D-glucosamine biosynthesis; N-acetyl-alpha-D-glucosamine 1-phosphate from alpha-D-glucosamine 6-phosphate (route II): step 2/2. The protein operates within nucleotide-sugar biosynthesis; UDP-N-acetyl-alpha-D-glucosamine biosynthesis; UDP-N-acetyl-alpha-D-glucosamine from N-acetyl-alpha-D-glucosamine 1-phosphate: step 1/1. It functions in the pathway bacterial outer membrane biogenesis; LPS lipid A biosynthesis. In terms of biological role, catalyzes the last two sequential reactions in the de novo biosynthetic pathway for UDP-N-acetylglucosamine (UDP-GlcNAc). The C-terminal domain catalyzes the transfer of acetyl group from acetyl coenzyme A to glucosamine-1-phosphate (GlcN-1-P) to produce N-acetylglucosamine-1-phosphate (GlcNAc-1-P), which is converted into UDP-GlcNAc by the transfer of uridine 5-monophosphate (from uridine 5-triphosphate), a reaction catalyzed by the N-terminal domain. This chain is Bifunctional protein GlmU, found in Tropheryma whipplei (strain TW08/27) (Whipple's bacillus).